A 570-amino-acid polypeptide reads, in one-letter code: Repressible high-affinity phosphate permease (570 aa).

Residues 1–61 are Cytoplasmic-facing; that stretch reads MSTPQKTAGG…AVAGVGFFTD (61 aa). Residues 62–82 traverse the membrane as a helical segment; that stretch reads SYDIFTVSLLTLMLGIVYFPG. The Extracellular portion of the chain corresponds to 83–95; it reads EGKMPTTSDTAIK. A helical membrane pass occupies residues 96–116; that stretch reads LATSAGTVIGQVGFGAAADVF. The Cytoplasmic segment spans residues 117-120; it reads GRKS. Residues 121 to 141 form a helical membrane-spanning segment; sequence MYGLELLFIIFATLAQALASG. Residues 142–143 are Extracellular-facing; it reads SP. A helical membrane pass occupies residues 144–164; that stretch reads SINIIGIIIFWRVLMGVGIGG. The Cytoplasmic portion of the chain corresponds to 165-186; sequence DYPLSSIITSEFATTKWRGAMM. A helical transmembrane segment spans residues 187–207; it reads GAVFAMQGLGQLAAAFVMLFV. The Extracellular segment spans residues 208-237; it reads TLGFKKSLEAAPTLASCTGDCAVAVDKMWR. Residues 238–258 traverse the membrane as a helical segment; that stretch reads TVIGVGAVPGCIALYYRLTIP. The Cytoplasmic portion of the chain corresponds to 259–325; the sequence is ETPRYTFDVK…FFRHYSKRKN (67 aa). Residues 326-346 traverse the membrane as a helical segment; sequence AMLLAGTALSWCFLDIAYYGV. The Extracellular segment spans residues 347-374; it reads SLNNATILNVIGYSTTGAKNTYEILYNT. The helical transmembrane segment at 375–395 threads the bilayer; sequence AVGNLIIVLAGAVPGYWVTVF. Topologically, residues 396 to 403 are cytoplasmic; sequence TVDTVGRK. The helical transmembrane segment at 404-424 threads the bilayer; the sequence is PIQFMGFGILTILFVVMGFAY. Residues 425-433 are Extracellular-facing; that stretch reads KHLSPHALL. A helical transmembrane segment spans residues 434-454; the sequence is AIFVLAQFFFNFGPNATTFIV. The Cytoplasmic portion of the chain corresponds to 455–468; it reads PGEVFPTRYRSTSH. The chain crosses the membrane as a helical span at residues 469 to 489; the sequence is GLSAAMGKIGSIIGQGAIAPL. Residues 490–505 lie on the Extracellular side of the membrane; that stretch reads RTRGAVKGGNPNPWMN. A helical transmembrane segment spans residues 506–526; sequence HVLEIYALFMLLGVGTTFLIP. Topologically, residues 527 to 570 are cytoplasmic; sequence ETKRKTLEELSGEFDMSGEEEAQRDTTLTEHKTEAPTSSAAVNA. The span at 537-546 shows a compositional bias: acidic residues; sequence SGEFDMSGEE. The interval 537 to 570 is disordered; sequence SGEFDMSGEEEAQRDTTLTEHKTEAPTSSAAVNA. Positions 547-560 are enriched in basic and acidic residues; that stretch reads EAQRDTTLTEHKTE. A compositionally biased stretch (polar residues) spans 561–570; that stretch reads APTSSAAVNA.

This sequence belongs to the major facilitator superfamily. Sugar transporter (TC 2.A.1.1) family.

The protein localises to the cell membrane. With respect to regulation, phosphate transport activity is competitively inhibited by arsenate. Its function is as follows. High-affinity transporter for external inorganic phosphate. Acts probably as a H(+)-phosphate symporter. The protein is Repressible high-affinity phosphate permease of Neurospora crassa (strain ATCC 24698 / 74-OR23-1A / CBS 708.71 / DSM 1257 / FGSC 987).